The chain runs to 235 residues: Phosphoribosylaminoimidazole-succinocarboxamide synthase (235 aa).

This sequence belongs to the SAICAR synthetase family.

The catalysed reaction is 5-amino-1-(5-phospho-D-ribosyl)imidazole-4-carboxylate + L-aspartate + ATP = (2S)-2-[5-amino-1-(5-phospho-beta-D-ribosyl)imidazole-4-carboxamido]succinate + ADP + phosphate + 2 H(+). The protein operates within purine metabolism; IMP biosynthesis via de novo pathway; 5-amino-1-(5-phospho-D-ribosyl)imidazole-4-carboxamide from 5-amino-1-(5-phospho-D-ribosyl)imidazole-4-carboxylate: step 1/2. The protein is Phosphoribosylaminoimidazole-succinocarboxamide synthase of Clostridium perfringens (strain 13 / Type A).